Reading from the N-terminus, the 151-residue chain is Dehydrin Rab16D (151 aa).

Positions 1 to 138 (MEYQGQHGGH…TADAGGEKKG (138 aa)) are disordered. The segment covering 39 to 51 (EPAREDKKTDGVL) has biased composition (basic and acidic residues). Low complexity-rich tracts occupy residues 90 to 105 (GNNQQQQQEHTTTTTG) and 117 to 132 (IATGAHGGTAATTADA).

The protein belongs to the plant dehydrin family.

The chain is Dehydrin Rab16D (RAB16D) from Oryza sativa subsp. indica (Rice).